Consider the following 141-residue polypeptide: Galactose-6-phosphate isomerase subunit LacA (141 aa).

It belongs to the LacAB/RpiB family. As to quaternary structure, heteromultimeric protein consisting of LacA and LacB.

It carries out the reaction aldehydo-D-galactose 6-phosphate = keto-D-tagatose 6-phosphate. The protein operates within carbohydrate metabolism; D-galactose 6-phosphate degradation; D-tagatose 6-phosphate from D-galactose 6-phosphate: step 1/1. The polypeptide is Galactose-6-phosphate isomerase subunit LacA (Streptococcus equi subsp. zooepidemicus (strain MGCS10565)).